Reading from the N-terminus, the 382-residue chain is Small ribosomal subunit protein mS35 (382 aa).

Residues 363-375 (GRGGKALPGGKGG) are compositionally biased toward gly residues. The segment at 363–382 (GRGGKALPGGKGGKMQRSKR) is disordered.

Belongs to the mitochondrion-specific ribosomal protein mS35 family. In terms of assembly, component of the mitochondrial small ribosomal subunit (mt-SSU). Mature N.crassa 74S mitochondrial ribosomes consist of a small (37S) and a large (54S) subunit. The 37S small subunit contains a 16S ribosomal RNA (16S mt-rRNA) and 32 different proteins. The 54S large subunit contains a 23S rRNA (23S mt-rRNA) and 42 different proteins.

Its subcellular location is the mitochondrion. Functionally, component of the mitochondrial ribosome (mitoribosome), a dedicated translation machinery responsible for the synthesis of mitochondrial genome-encoded proteins, including at least some of the essential transmembrane subunits of the mitochondrial respiratory chain. The mitoribosomes are attached to the mitochondrial inner membrane and translation products are cotranslationally integrated into the membrane. This Neurospora crassa (strain ATCC 24698 / 74-OR23-1A / CBS 708.71 / DSM 1257 / FGSC 987) protein is Small ribosomal subunit protein mS35 (rsm24).